Consider the following 651-residue polypeptide: NADH oxidase (651 aa).

Gln-104 provides a ligand contact to FMN. Tyr-175 (proton donor) is an active-site residue. FMN is bound by residues Arg-223 and 320 to 321 (GR). The [4Fe-4S] cluster site is built by Cys-344, Cys-347, Cys-351, and Cys-364. FAD-binding residues include Ala-396, Glu-415, Gln-423, Lys-433, and Ala-460.

In the N-terminal section; belongs to the NADH:flavin oxidoreductase/NADH oxidase family. In terms of assembly, homohexamer. FMN serves as cofactor. The cofactor is FAD. It depends on [4Fe-4S] cluster as a cofactor. The N-terminus is blocked.

It catalyses the reaction A + NADH + H(+) = AH2 + NAD(+). Its function is as follows. Reduces a range of alternative electron acceptors. In Thermoanaerobacter brockii (Thermoanaerobium brockii), this protein is NADH oxidase.